A 571-amino-acid polypeptide reads, in one-letter code: Putative pyruvate decarboxylase C13A11.06 (571 aa).

Pyruvate contacts are provided by aspartate 29 and histidine 118. Thiamine diphosphate contacts are provided by residues threonine 395 and 418–420 (GSI). Aspartate 450 is a Mg(2+) binding site. Residues 451 to 452 (GS) and 477 to 482 (NDGYTI) each bind thiamine diphosphate. Asparagine 477 and glycine 479 together coordinate Mg(2+). Residue glutamate 483 participates in pyruvate binding.

The protein belongs to the TPP enzyme family. In terms of assembly, homotetramer. The cofactor is Mg(2+). Thiamine diphosphate is required as a cofactor.

It carries out the reaction a 2-oxocarboxylate + H(+) = an aldehyde + CO2. It catalyses the reaction pyruvate + H(+) = acetaldehyde + CO2. The sequence is that of Putative pyruvate decarboxylase C13A11.06 from Schizosaccharomyces pombe (strain 972 / ATCC 24843) (Fission yeast).